The primary structure comprises 158 residues: Transcription elongation factor GreA (158 aa).

The stretch at 47 to 74 (AEYHAAKEEQSHNEGRIAELEDKLARAD) forms a coiled coil.

It belongs to the GreA/GreB family.

Functionally, necessary for efficient RNA polymerase transcription elongation past template-encoded arresting sites. The arresting sites in DNA have the property of trapping a certain fraction of elongating RNA polymerases that pass through, resulting in locked ternary complexes. Cleavage of the nascent transcript by cleavage factors such as GreA or GreB allows the resumption of elongation from the new 3'terminus. GreA releases sequences of 2 to 3 nucleotides. This chain is Transcription elongation factor GreA, found in Nitrobacter winogradskyi (strain ATCC 25391 / DSM 10237 / CIP 104748 / NCIMB 11846 / Nb-255).